Reading from the N-terminus, the 369-residue chain is Probable serine/threonine-protein kinase DDB_G0291350 (369 aa).

A Protein kinase domain is found at 22-367 (YTVNRILGEG…QVIERINQII (346 aa)). Residues 28-36 (LGEGGFSFV) and K51 each bind ATP. The Proton acceptor role is filled by D159. The segment at 169–225 (NLRRPSNNNNNNNNNNNNNNNNNNNNNNNNNNNNNNNNNNNNNNNNNNNNNNNSEDS) is disordered. The span at 175-221 (NNNNNNNNNNNNNNNNNNNNNNNNNNNNNNNNNNNNNNNNNNNNNNN) shows a compositional bias: low complexity.

The protein belongs to the protein kinase superfamily. Ser/Thr protein kinase family.

It carries out the reaction L-seryl-[protein] + ATP = O-phospho-L-seryl-[protein] + ADP + H(+). The enzyme catalyses L-threonyl-[protein] + ATP = O-phospho-L-threonyl-[protein] + ADP + H(+). The polypeptide is Probable serine/threonine-protein kinase DDB_G0291350 (Dictyostelium discoideum (Social amoeba)).